The sequence spans 238 residues: Metal-independent phosphoserine phosphatase (238 aa).

The active-site Tele-phosphohistidine intermediate is histidine 32. Residue glutamate 107 is the Proton donor/acceptor of the active site.

It belongs to the phosphoglycerate mutase family.

The enzyme catalyses O-phospho-L-serine + H2O = L-serine + phosphate. It carries out the reaction O-phospho-D-serine + H2O = D-serine + phosphate. Phosphoglycerate mutase-like protein lacking PGM activity, but having a low metal-independent phosphoserine phosphatase activity in vitro. May be involved in serine biosynthesis. This Arabidopsis thaliana (Mouse-ear cress) protein is Metal-independent phosphoserine phosphatase (IPSP).